Consider the following 291-residue polypeptide: Small ribosomal subunit biogenesis GTPase RsgA (291 aa).

In terms of domain architecture, CP-type G spans 63–221; the sequence is QNELKRPPVS…VADTPGFSAL (159 aa). Residues 112 to 115 and 164 to 172 contribute to the GTP site; these read TKKD and GQSGVGKST. 4 residues coordinate Zn(2+): cysteine 245, cysteine 250, histidine 252, and cysteine 258.

This sequence belongs to the TRAFAC class YlqF/YawG GTPase family. RsgA subfamily. As to quaternary structure, monomer. Associates with 30S ribosomal subunit, binds 16S rRNA. Zn(2+) serves as cofactor.

The protein resides in the cytoplasm. Its function is as follows. One of several proteins that assist in the late maturation steps of the functional core of the 30S ribosomal subunit. Helps release RbfA from mature subunits. May play a role in the assembly of ribosomal proteins into the subunit. Circularly permuted GTPase that catalyzes slow GTP hydrolysis, GTPase activity is stimulated by the 30S ribosomal subunit. The protein is Small ribosomal subunit biogenesis GTPase RsgA of Staphylococcus carnosus (strain TM300).